Consider the following 2155-residue polypeptide: Polyketide synthase 2 (2155 aa).

The segment at 7–244 (FIFGDQTGGF…IPIPIWAPYH (238 aa)) is N-terminal acylcarrier protein transacylase domain (SAT). Residues 374 to 807 (DSKIAIIGMS…GGNSALLLED (434 aa)) form the Ketosynthase family 3 (KS3) domain. Catalysis depends on for beta-ketoacyl synthase activity residues C546, H681, and H723. The interval 908 to 1213 (GFVFSGQGAQ…ASLHRKDDGW (306 aa)) is malonyl-CoA:ACP transacylase (MAT) domain. The active-site For acyl/malonyl transferase activity is S998. A product template (PT) domain region spans residues 1290 to 1605 (TSSVQRIIRQ…RSLLNKVLPP (316 aa)). The segment at 1294–1428 (QRIIRQTDGP…CLLRFADPTS (135 aa)) is N-terminal hotdog fold. The 307-residue stretch at 1294-1600 (QRIIRQTDGP…FLGMSRSLLN (307 aa)) folds into the PKS/mFAS DH domain. The active-site Proton acceptor; for dehydratase activity is H1327. The C-terminal hotdog fold stretch occupies residues 1455 to 1600 (TDSLLSKGIV…FLGMSRSLLN (146 aa)). Catalysis depends on D1514, which acts as the Proton donor; for dehydratase activity. The segment at 1626 to 1654 (AASAKDTERRPLDIPTRAQRQPSSPQTGT) is disordered. The segment covering 1643–1654 (AQRQPSSPQTGT) has biased composition (polar residues). The region spanning 1649–1726 (SPQTGTMGRI…ELKAFLGADQ (78 aa)) is the Carrier 1 domain. The residue at position 1686 (S1686) is an O-(pantetheine 4'-phosphoryl)serine. The segment at 1735 to 1765 (SSIGQHTPQTSDKGSGTLASQKTDGDTGPDT) is disordered. The segment covering 1736-1756 (SIGQHTPQTSDKGSGTLASQK) has biased composition (polar residues). The Carrier 2 domain maps to 1764-1838 (DTTLNRVCAI…ALQKALCGSE (75 aa)). Residue S1798 is modified to O-(pantetheine 4'-phosphoryl)serine. The segment at 1873 to 2149 (ASPPHATSIL…MVEMGNLIGD (277 aa)) is thioesterase (TE) domain. The For thioesterase activity role is filled by S1979.

Functionally, polyketide synthase; part of the Pks2 gene cluster that mediates the formation of infectious structures (appressoria), enabling these fungi to kill insects faster. The product of the Pks2 gene cluster is different from the one of Pks1 and has still not been identified. This chain is Polyketide synthase 2, found in Metarhizium anisopliae (strain ARSEF 549).